Reading from the N-terminus, the 216-residue chain is MGQKTHPTGFRIGINKSHDSTWFANYGTYGEILKEDYKIRKFFENDWGTLYNKAGVSKVEIKRKVNQLELLIHAARPKAIAGTADEESTFSTLRAQIKKLTNNPKQTRIKVIQVNKMETESVLVARALAEQLEKRVAFKRAIRLVAQRLQKSGTKGFKIQVSGRLNGAEMARDEWVREGRVPLQTLRADISYATARAYTTYGVLGIKVWIFNKEII.

The region spanning 43 to 115 (FENDWGTLYN…QTRIKVIQVN (73 aa)) is the KH type-2 domain.

It belongs to the universal ribosomal protein uS3 family. Part of the 30S ribosomal subunit.

The protein resides in the plastid. It is found in the chloroplast. The sequence is that of Small ribosomal subunit protein uS3c (rps3) from Emiliania huxleyi (Coccolithophore).